Here is a 297-residue protein sequence, read N- to C-terminus: Mitochondrial citrate transporter A (297 aa).

Solcar repeat units follow at residues 12 to 91 (PSSL…LKSL), 102 to 188 (PKTV…LKQM), and 199 to 286 (LGTA…TMDA). 6 helical membrane-spanning segments follow: residues 18-31 (IIAG…EIAI), 61-81 (SQWY…AGIR), 99-119 (ISGP…SLLA), 160-180 (FFQG…TRFS), 192-212 (YVAP…GIAG), and 251-272 (KDEG…LIMS).

Belongs to the mitochondrial carrier (TC 2.A.29) family.

The protein resides in the mitochondrion inner membrane. It catalyses the reaction citrate(in) + H(+)(in) = citrate(out) + H(+)(out). Functionally, mitochondrial transporter that mediates citrate export from mitochondria to cytoplasm. Both ctpA, ctpB, and ctpD play important roles in citric acid transport across the mitochondrial membrane and function in a redundant manner. This is Mitochondrial citrate transporter A from Aspergillus niger (strain ATCC 1015 / CBS 113.46 / FGSC A1144 / LSHB Ac4 / NCTC 3858a / NRRL 328 / USDA 3528.7).